The chain runs to 376 residues: D-alanine--D-alanine ligase (376 aa).

The 209-residue stretch at 150 to 358 (KIIFEKEGLP…YSELINKLIE (209 aa)) folds into the ATP-grasp domain. 183–238 (EGRLTYPCFVKPSNAGSSVGVNKASDRESLVKALNIAAKNDRRILVEEFINGREIE) is an ATP binding site. Residues D311, E325, and N327 each coordinate Mg(2+).

It belongs to the D-alanine--D-alanine ligase family. Mg(2+) is required as a cofactor. The cofactor is Mn(2+).

Its subcellular location is the cytoplasm. It carries out the reaction 2 D-alanine + ATP = D-alanyl-D-alanine + ADP + phosphate + H(+). Its pathway is cell wall biogenesis; peptidoglycan biosynthesis. Its function is as follows. Cell wall formation. The protein is D-alanine--D-alanine ligase of Ruminiclostridium cellulolyticum (strain ATCC 35319 / DSM 5812 / JCM 6584 / H10) (Clostridium cellulolyticum).